A 161-amino-acid chain; its full sequence is Ribonuclease H (161 aa).

Residues Gly-3–Glu-144 enclose the RNase H type-1 domain. 4 residues coordinate Mg(2+): Asp-12, Glu-50, Asp-72, and Asp-136. A disordered region spans residues Glu-133 to Ala-161. Residues Glu-150 to Ala-161 show a composition bias toward polar residues.

It belongs to the RNase H family. Monomer. Mg(2+) serves as cofactor.

It is found in the cytoplasm. The enzyme catalyses Endonucleolytic cleavage to 5'-phosphomonoester.. In terms of biological role, endonuclease that specifically degrades the RNA of RNA-DNA hybrids. The protein is Ribonuclease H of Shewanella halifaxensis (strain HAW-EB4).